The primary structure comprises 901 residues: MKGSDIPHVEANYVDLGRAVGTVCDNAHRELANVLETLPSTPADVAKKQALLEVLVRARQEFVRTYVLTKWAKVSEDVTKCIDVVAWLHGQRNCFDNLNHMLVGLGRDLGAAKSRNPDLQTAVQVLTRGAPTTFGDHDMAPKKKLKPQTILRTLRDLNVLLSVQLAQSTDIPPQFKRYKIANGRATFTVANAFEVDVGIADDTLDGPFFFIDFRLLFGDRKELPPQTRGMLERAGNSALAQRGLSALYSLLMKFALNYKLALIYKQIMEMSKGLWSGTLRHRFYQERSLIALEYWVSQHATHRPKSTLEIGIFSESDLRIAVRWSRQGEEVPYSEHQIQFGGESTDVASLLEYVTTLHLKHIISCVYTKLRALLGDSSDMVSLCSDGHKLRFRLTSLRSTVFTVDRLTGKTVLENATSLILSAERSLNELVSRPDQAASVLFKLRLLSLENDIRTRACATGWTAQNVTLSTDEMKTHFGFTTRYVLFLRQPQWPSNWFVVVTVPEDGSLPLWWIAKLRVRKDTAWTAECMDRIHVNQDLDSLYDYELLTQMVTFASHRIVLHPILDELRAAKTPFRLLRSAQHTPVVAIDNSALVTSWSHSSLLILPEMSAGSMDMKLHVQGRAKTVMNLPSNDSIDFDASTGIYKLTLEGANTPGFSLVNKLKERLQQIEQIVSYIELIKDLGLELVTASMQQIKFKLGDAQVSVDIPSELNPNITLHLSPTDPHNIIHSYLQETLNSSGLRPVVWLLQTTRNLYTTLQKLQKTRGGDPEQLEKIISNLSISDLETRQKQLQPRLSIVPRSAAFVRLVYPGKMNIDVTLVRHSATLDGVKFFIKESPLELPPPPQPGQPPVAVPRKLQVWNGSVTPDVDVGKAVYLNDGIACEGDNVGKVLEWVDKQIGK.

Belongs to the Mediator complex subunit 14 family. Component of the Mediator complex.

It is found in the nucleus. Its function is as follows. Component of the Mediator complex, a coactivator involved in the regulated transcription of nearly all RNA polymerase II-dependent genes. Mediator functions as a bridge to convey information from gene-specific regulatory proteins to the basal RNA polymerase II transcription machinery. Mediator is recruited to promoters by direct interactions with regulatory proteins and serves as a scaffold for the assembly of a functional preinitiation complex with RNA polymerase II and the general transcription factors. The sequence is that of Mediator of RNA polymerase II transcription subunit 14 (RGR1) from Yarrowia lipolytica (strain CLIB 122 / E 150) (Yeast).